A 746-amino-acid chain; its full sequence is WD repeat-containing protein 91 (746 aa).

The stretch at 183–215 (QRTNQVQEENEVLRQKLFALQAEIHRLKKEEQQ) forms a coiled coil. Ser-256 is modified (phosphoserine). Positions 265 to 278 (LLPQSKKSPSRLSP) are enriched in low complexity. Residues 265 to 336 (LLPQSKKSPS…QHRQRRLQDH (72 aa)) form a disordered region. Residues 282–299 (PPQTQSSAKKESFGSQTT) show a composition bias toward polar residues. Residues Ser-288 and Ser-293 each carry the phosphoserine modification. WD repeat units lie at residues 405 to 444 (EHHSSIMHCRVDCSGRRVASLDVDGVIKVWSFNPIMQTKA), 447 to 487 (ISKS…NLCE), 514 to 554 (AASS…QQLQ), 559 to 598 (PEPIAINCTAFNHNGNLLVTGAADGVIRLFDMQQHECAMS), 601 to 640 (AHCGEVYSVEFSYDENTVYSIGEDGKFIQWNIHKSGLKVS), 663 to 701 (VQVPRGRLFAFDSEGNYMLTCSATGGVIYKLGGDDKVLE), and 708 to 746 (GHRAPVVTVDWSTAMDCGTCLTASMDGKIKLTTLLAHKV).

The protein belongs to the WD repeat WDR91 family. As to quaternary structure, interacts with WDR81; involved in early to late endosome cargo transport. Interacts with BECN1; negatively regulates the PI3 kinase/PI3K activity associated with endosomal membranes.

The protein resides in the early endosome membrane. Its subcellular location is the late endosome membrane. In terms of biological role, functions as a negative regulator of the PI3 kinase/PI3K activity associated with endosomal membranes via BECN1, a core subunit of the PI3K complex. By modifying the phosphatidylinositol 3-phosphate/PtdInsP3 content of endosomal membranes may regulate endosome fusion, recycling, sorting and early to late endosome transport. It is for instance, required for the delivery of cargos like BST2/tetherin from early to late endosome and thereby participates indirectly to their degradation by the lysosome. May play a role in meiosis. The chain is WD repeat-containing protein 91 from Bos taurus (Bovine).